Reading from the N-terminus, the 158-residue chain is Style cell-cycle inhibitor 1-B (158 aa).

Composition is skewed to basic and acidic residues over residues 1–11 and 22–47; these read MGSDKKTTEEK and PRDEVKSKRQNIKGDEERRKEKDKSK. The disordered stretch occupies residues 1-88; sequence MGSDKKTTEE…DKSKNKFEEL (88 aa). Composition is skewed to basic residues over residues 48-58 and 67-81; these read KEKHKSHKSKC and GEKHKTKSHKHKDKS.

Specifically expressed in flowers pistils, especially in stigmas and styles. Barely detected in roots, stems, leaves, sepals, petals and stamen.

It localises to the nucleus. Its function is as follows. Component of the auxin signaling transduction pathway that regulates cell proliferation and differentiation during flowers stigmas and styles development. Involved in the regulation of auxin-related genes. The chain is Style cell-cycle inhibitor 1-B from Nicotiana tabacum (Common tobacco).